The sequence spans 413 residues: Glycosyl hydrolase family 109 protein 2 (413 aa).

NAD(+) is bound by residues 26-27 (NR), Asp-48, 96-99 (WLTH), 116-117 (EV), and Asn-145. Residue Tyr-174 participates in substrate binding. NAD(+) contacts are provided by residues 191–195 (YHNHW) and Tyr-208. Residues 208-211 (YPTH) and Tyr-290 contribute to the substrate site.

It belongs to the Gfo/Idh/MocA family. Glycosyl hydrolase 109 subfamily. NAD(+) is required as a cofactor.

Its function is as follows. Glycosidase. In Phocaeicola vulgatus (strain ATCC 8482 / DSM 1447 / JCM 5826 / CCUG 4940 / NBRC 14291 / NCTC 11154) (Bacteroides vulgatus), this protein is Glycosyl hydrolase family 109 protein 2.